The following is a 1068-amino-acid chain: Sucrose-phosphate synthase (1068 aa).

Disordered stretches follow at residues 18-47 (HTSS…GAHM) and 118-139 (KEQE…SEGE). A compositionally biased stretch (gly residues) spans 23–32 (GAGGGGGGGD). The span at 118–128 (KEQEQVRREAT) shows a compositional bias: basic and acidic residues.

It belongs to the glycosyltransferase 1 family. In terms of assembly, homodimer or homotetramer.

It catalyses the reaction beta-D-fructose 6-phosphate + UDP-alpha-D-glucose = sucrose 6(F)-phosphate + UDP + H(+). Its pathway is glycan biosynthesis; sucrose biosynthesis; sucrose from D-fructose 6-phosphate and UDP-alpha-D-glucose: step 1/2. With respect to regulation, activity is regulated by phosphorylation and moderated by concentration of metabolites and light. In terms of biological role, plays a role in photosynthetic sucrose synthesis by catalyzing the rate-limiting step of sucrose biosynthesis from UDP-glucose and fructose- 6-phosphate. Involved in the regulation of carbon partitioning in the leaves of plants. May regulate the synthesis of sucrose and therefore play a major role as a limiting factor in the export of photoassimilates out of the leaf. Plays a role for sucrose availability that is essential for plant growth and fiber elongation. The protein is Sucrose-phosphate synthase of Zea mays (Maize).